We begin with the raw amino-acid sequence, 257 residues long: MSILFYMIFLAYLRGIQGNSMDQRRLPEDSLNSLIIKLIQADILKNKLSKQMVDLQENYQSTLPKAEAPREPERGEPAKSEFQPVTAVGPEWLRHHRRYNSPRVLLSDSTPLEPPPLYLVEDYVGNPSVANRTARRKRYAEHKSHRGEYSVCDSESLWVTDKSSAIDIRGHQVTVLGEIKTGNSPVKQYFYETRCKEARPVKNGCRGIDDKHWNSQCKTSQTYFRALTSYNNKLVGWRWIRIDTSCVCALSRKIGRT.

The first 18 residues, 1–18 (MSILFYMIFLAYLRGIQG), serve as a signal peptide directing secretion. Positions 19 to 138 (NSMDQRRLPE…VANRTARRKR (120 aa)) are excised as a propeptide. Residues 61–81 (STLPKAEAPREPERGEPAKSE) are disordered. The span at 67–79 (EAPREPERGEPAK) shows a compositional bias: basic and acidic residues. A glycan (N-linked (GlcNAc...) asparagine) is linked at N131. Disulfide bonds link C152–C217, C195–C246, and C205–C248.

Belongs to the NGF-beta family.

The protein localises to the secreted. Seems to promote the survival of visceral and proprioceptive sensory neurons. In Sus scrofa (Pig), this protein is Neurotrophin-3 (NTF3).